The primary structure comprises 953 residues: MEKPCTLLVHFDKGSPSMANEIKADLEGSDVAAKVDAMKRAIMLLLNGETLPHLFITVVRYVLPSEDHTIQKLLLLYLEIVDKRDVASGKVLPEMILICQNLRNNLQHPNEYIRGVTLRFLCRLNEPELLEPLIPSILANLDHRHHFIRRHALSAISAIYRLPHGDQLLPDAPEVVERALTGEQDASARRNGFLMLCACAQERAVAYLLTNAERVAEWPDLLQMAAVDLIRKVCRSPNRADKGRYIKIIISLLSAPNSAVVYESAGALVSLSSAPTAVRAAANTYCQLLSSQSDNNVKLIVLDRLHELRASHRDVMVDVVMDVLRALSSPNVDVRRKVLDLVLDLLTPRNVEEVVMYLKKEVVKTQAGDLEKGGEYRQMLVQAIHSCAVEYPEVAGSVVHLLMDFLGDTNVAAAVDVVLFVREIIETNPKLRVSMIQRLIDTFYQIRASRVCSCALWILGEYSLSLSEVESAISTIKQCLGDLPFYTVSEEGESTDASKPAQPVVNSVTVSSRRPVVLADGTYATQSAATETAISSPAVAPGSLSSTQNLRSLILSGDFFLAAVVACTLTKLVLRLEEVQPSKAEANKASTGALLIMVSILQLGQSSYLPHPIDNDSYDRIVLCVRLLCNTGDDVRKVWLQSCRQSFTKMLAEKQFRETEEMKAKAQISHAQPDDLIDFYHLKSRRGMSQLELEDAVQDDLKAATGEFTKDADDANRLNRILQLTGFSDPVYAEAYVTVHHYDIVLDVTVINRTKETLQNLCLELATMGDLKLVDRPQNYTLAPESSKQIRANIKVSSTETGVIFGNIVYETSNVMERSVVVLNDIHIDIMDYISPATCADVAFRNMWAEFEWENKVAVNTVIQDEKEFLDHIIKSTNMKCLTPPSALDGECGFIAANLYAKSVFGEDALVNISVEKQADGKLSGYIRIRSKTQGIALSLGDKITLKQKGGSS.

5 HEAT repeats span residues Glu-49–Ala-87, Pro-93–Pro-127, Glu-128–Gly-165, Asp-314–Val-351, and Glu-393–Lys-430.

Oligomeric complex that consists of at least the alpha, beta, beta', gamma, delta, epsilon and zeta subunits.

It is found in the cytoplasm. Its subcellular location is the golgi apparatus membrane. The protein localises to the cytoplasmic vesicle. The protein resides in the COPI-coated vesicle membrane. Its function is as follows. The coatomer is a cytosolic protein complex that binds to dilysine motifs and reversibly associates with Golgi non-clathrin-coated vesicles, which further mediate biosynthetic protein transport from the ER, via the Golgi up to the trans Golgi network. Coatomer complex is required for budding from Golgi membranes, and is essential for the retrograde Golgi-to-ER transport of dilysine-tagged proteins. The protein is Coatomer subunit beta-1 of Oryza sativa subsp. japonica (Rice).